The primary structure comprises 580 residues: DNA mismatch repair protein MutL (580 aa).

This sequence belongs to the DNA mismatch repair MutL/HexB family.

Its function is as follows. This protein is involved in the repair of mismatches in DNA. It is required for dam-dependent methyl-directed DNA mismatch repair. May act as a 'molecular matchmaker', a protein that promotes the formation of a stable complex between two or more DNA-binding proteins in an ATP-dependent manner without itself being part of a final effector complex. This is DNA mismatch repair protein MutL from Chlamydia felis (strain Fe/C-56) (Chlamydophila felis).